The sequence spans 129 residues: Glycine cleavage system H protein (129 aa).

The Lipoyl-binding domain occupies 24-106; it reads HAVVGITDFA…YDGGWLFKLA (83 aa). The residue at position 65 (Lys-65) is an N6-lipoyllysine.

This sequence belongs to the GcvH family. As to quaternary structure, the glycine cleavage system is composed of four proteins: P, T, L and H. Requires (R)-lipoate as cofactor.

In terms of biological role, the glycine cleavage system catalyzes the degradation of glycine. The H protein shuttles the methylamine group of glycine from the P protein to the T protein. This Hydrogenovibrio crunogenus (strain DSM 25203 / XCL-2) (Thiomicrospira crunogena) protein is Glycine cleavage system H protein.